The following is a 547-amino-acid chain: Chaperonin GroEL (547 aa).

ATP-binding positions include 30–33, lysine 51, 87–91, glycine 415, 479–481, and aspartate 495; these read TLGP, DGTTT, and DAA.

This sequence belongs to the chaperonin (HSP60) family. As to quaternary structure, forms a cylinder of 14 subunits composed of two heptameric rings stacked back-to-back. Interacts with the co-chaperonin GroES.

The protein resides in the cytoplasm. It carries out the reaction ATP + H2O + a folded polypeptide = ADP + phosphate + an unfolded polypeptide.. Its function is as follows. Together with its co-chaperonin GroES, plays an essential role in assisting protein folding. The GroEL-GroES system forms a nano-cage that allows encapsulation of the non-native substrate proteins and provides a physical environment optimized to promote and accelerate protein folding. This is Chaperonin GroEL from Dichelobacter nodosus (strain VCS1703A).